A 209-amino-acid chain; its full sequence is Probable nicotinate-nucleotide adenylyltransferase (209 aa).

The protein belongs to the NadD family.

It carries out the reaction nicotinate beta-D-ribonucleotide + ATP + H(+) = deamido-NAD(+) + diphosphate. It participates in cofactor biosynthesis; NAD(+) biosynthesis; deamido-NAD(+) from nicotinate D-ribonucleotide: step 1/1. Functionally, catalyzes the reversible adenylation of nicotinate mononucleotide (NaMN) to nicotinic acid adenine dinucleotide (NaAD). This is Probable nicotinate-nucleotide adenylyltransferase from Shewanella woodyi (strain ATCC 51908 / MS32).